The sequence spans 636 residues: C-terminal binding protein AN (636 aa).

The segment at 1 to 21 (MSKIRSSATMPHRDQPSPASP) is disordered. Residues serine 91, 147–148 (WL), 169–174 (VGRSVS), aspartate 193, 231–237 (CALTNDT), 258–260 (TGS), aspartate 284, and 307–311 (RSADY) each bind NAD(+). The tract at residues 341–489 (VSDEEVEESE…PLEVMQESSP (149 aa)) is disordered. Over residues 342–357 (SDEEVEESEASEEEEQ) the composition is skewed to acidic residues. Polar residues predominate over residues 369 to 384 (ESTSRQQGESTLTSTE). Basic and acidic residues predominate over residues 385–395 (IVRREASELKE). Over residues 398-409 (SPGQQHVSQNTA) the composition is skewed to polar residues. A compositionally biased stretch (basic residues) spans 417-429 (SRSGKKAKKRHSQ). Positions 430–445 (QKYMQKTDGSSGLNEE) are enriched in polar residues. Basic and acidic residues predominate over residues 470–480 (SPEDSRSRKTP).

The protein belongs to the D-isomer specific 2-hydroxyacid dehydrogenase family. Plant AN subfamily. In terms of assembly, homodimer. Interacts with KCBP and SUB (via intra-cellular domain); AN is not required for the correct subcellular localization and recycling of SUB. Binds to SOKs proteins polymers (e.g. SOK1, SOK2, SOK3 and SOK4). Interacts with IPGA1 on microtubule upon mechanical stress to regulate microtubule organization. NAD(+) serves as cofactor. In terms of tissue distribution, expressed in cotyledons, leaves, roots, stems and floral buds.

It is found in the cytoplasm. It localises to the golgi apparatus. The protein localises to the trans-Golgi network. The protein resides in the cytoskeleton. In terms of biological role, involved in controlling the equilibrium between tubular and stacked structures in the Golgi complex. Required for cortical microtubules (MTs) arrangement that confers cell shape. Cooperatively with IPGA1, negatively regulates cortical microtubules (CMTs) organization in response to mechanical stress and modulates pavement cells morphogenesis leading to puzzle shape, probably in an AAA1/KTN1-dependent manner. Regulates the width of leaves by controlling the polar elongation of leaf cells. Involved in the regulation of trichome branching. Seems to not be able to regulate gene transcription. Regulates epidermal cell divisions and elongation in a non-cell-autonomous manner (regulated by subepidermal cells), but regulates epidermal cell polarity, shape, trichome branching and elongation in a cell-autonomous manner. Negatively regulates growth in the petiole elongation. Prevents lipid peroxidation as a result of abiotic stress response. Is involved in the SUB-dependent signaling mechanism and may act in a membrane trafficking event around the trans-Golgi network. The sequence is that of C-terminal binding protein AN from Arabidopsis thaliana (Mouse-ear cress).